The primary structure comprises 155 residues: Troponin C, isoform 3 (155 aa).

EF-hand domains are found at residues 11–46 (EQIA…MGQP), 47–82 (FDKK…FIVE), 87–122 (AMQK…LDDQ), and 123–155 (LTEQ…MTGE). Ca(2+) contacts are provided by Asp-60, Asp-62, Ser-64, Arg-66, and Glu-71. Residues Asp-136, Asp-138, Ser-140, Thr-142, and Glu-147 each coordinate Ca(2+).

Belongs to the troponin C family. Present in both larval and adult muscles.

The chain is Troponin C, isoform 3 (TpnC73F) from Drosophila melanogaster (Fruit fly).